The following is a 299-amino-acid chain: MTAEIIDGKAFAAGVRAKVAHNVETLRDTHGITPGLAVVLVGEDPASEVYVANKHRQTVEVGMASFSHKLPAKTSEADLFALIDQLNADPAVHGILCQFPVPEHLNERAVVARIDPAKDVDGLSVVNAGLLASGERGLVSCTPLGCLMLLRDRLGDLSGLEAVVIGRSNLFGKPMGQLLLRENATVTMAHSRTRDLAQVCRRADILVAAVGRAEMVKADWVKPGATVIDVGITRQPHPDDPDKTRLLGDVDFAAVAEVAGAITPVPGGVGPMTIACLLANTVTACCRAHGLPEPDGLAV.

NADP(+) is bound by residues 166–168 (GRS), serine 191, and isoleucine 232.

Belongs to the tetrahydrofolate dehydrogenase/cyclohydrolase family. As to quaternary structure, homodimer.

It carries out the reaction (6R)-5,10-methylene-5,6,7,8-tetrahydrofolate + NADP(+) = (6R)-5,10-methenyltetrahydrofolate + NADPH. The enzyme catalyses (6R)-5,10-methenyltetrahydrofolate + H2O = (6R)-10-formyltetrahydrofolate + H(+). It participates in one-carbon metabolism; tetrahydrofolate interconversion. Functionally, catalyzes the oxidation of 5,10-methylenetetrahydrofolate to 5,10-methenyltetrahydrofolate and then the hydrolysis of 5,10-methenyltetrahydrofolate to 10-formyltetrahydrofolate. The polypeptide is Bifunctional protein FolD (Dinoroseobacter shibae (strain DSM 16493 / NCIMB 14021 / DFL 12)).